Consider the following 552-residue polypeptide: Putative transport protein NT01EI_3867 (552 aa).

5 consecutive transmembrane segments (helical) span residues 4–24 (IALT…IGNW), 26–46 (IYGV…VGHF), 65–85 (FGLI…FFSS), 90–112 (GLRL…AAIH), and 158–178 (MGYA…IWLI). 2 RCK C-terminal domains span residues 191-276 (RDFD…VIGE) and 279-361 (DTSL…IVGN). The next 6 helical transmembrane spans lie at 371–391 (MLPV…PLFI), 403–425 (AGGP…LYWF), 439–459 (IVLF…DTLL), 464–484 (VTWI…AALL), 493–513 (YLTL…LAFA), and 530–550 (VYPL…LLFW).

The protein belongs to the AAE transporter (TC 2.A.81) family. YidE subfamily.

It localises to the cell membrane. This chain is Putative transport protein NT01EI_3867, found in Edwardsiella ictaluri (strain 93-146).